A 604-amino-acid polypeptide reads, in one-letter code: Ribosome-inactivating protein PMRIPm (604 aa).

The signal sequence occupies residues 1-43 (MRVVAAILYINVVVALICGLGIQGGALDLQDYPSVSFQGDAMQ). Glutamate 211 is an active-site residue. Cystine bridges form between cysteine 301–cysteine 332, cysteine 348–cysteine 367, and cysteine 392–cysteine 409. Ricin B-type lectin domains lie at 335–463 (GEPT…WRVG) and 466–598 (VEPI…WLTV). The stretch at 345-387 (AGWCVDVKDGRDNDGNPIQVLSCGDGQERKQQWTFHRDGTIRS) is one 1-alpha repeat. One copy of the 1-beta repeat lies at 389–429 (LGKCMTAYGFKHGEYVMIYDCDTAIAGANKWVVSIDGTITN). A 1-gamma repeat occupies 432–465 (SGLVLTAPRGATGTTLLVEKNVHAARQCWRVGDD). The stretch at 477-521 (QEKCLEANYLENTNVSRYTKVFLDDCVLDRQQQRWALYSDGTIRA) is one 2-alpha repeat. A disulfide bridge links cysteine 480 with cysteine 502. The N-linked (GlcNAc...) asparagine glycan is linked to asparagine 490. A 2-beta repeat occupies 525-563 (RSLRVTADGHRSLDSIIILACKGWGNQRWVFNTDGTILN). The 2-gamma repeat unit spans residues 566 to 599 (AKLVMDVKDSDVSLLQIILHQSTGKPNQKWLTVT).

The protein belongs to the ribosome-inactivating protein family. Type 2 RIP subfamily. In terms of assembly, disulfide-linked dimer of A and B chains. Post-translationally, the precursor is processed in two chains, A and B, that are linked by a disulfide bond. In terms of processing, glycosylated. The N-terminus is blocked. As to expression, expressed in rhizome and abundantly in leaves (at protein level).

The catalysed reaction is Endohydrolysis of the N-glycosidic bond at one specific adenosine on the 28S rRNA.. Its activity is regulated as follows. Strongly inhibited by asialofetuin and asialomucin. Its function is as follows. Gal/GalNAc-specific agglutinin. Behaves as a type-2 ribosome-inactivating protein. Inhibits mammalian ribosomes. The A chain is responsible for inhibiting protein synthesis through the catalytic inactivation of 60S ribosomal subunits by removing adenine from position 4,324 of 28S rRNA. The B chain binds to cell receptors and probably facilitates the entry into the cell of the A chain; B chains are also responsible for cell agglutination (lectin activity). Involved in plant defense against insects. Has very low cytotoxic activity against the human tumor cell line Molt4, but higher against CEM. This Polygonatum multiflorum (Solomon's seal) protein is Ribosome-inactivating protein PMRIPm.